Reading from the N-terminus, the 518-residue chain is MTAYKPYRHQLRRSLFASTIFPVFLVIIIGLVSFYAIYIWIEHRTIHQHVDESQSSLHHTEKQIQTFITQHNNSFQELDLTNHHDVTATKRELLKLIHQQPATLYYELSGPNQFITNNYEHLNTKNMYLFSTHQLKFNNSTYMLKIYMANTPRLSEIKKDSRQFALIVDQYDNILYANDDRFTIGEKYRPQQFGFMNESVKLNHADHRLIIYKDIHENIEDGITLLIVMAVVLVLLVIFGFISADNMAKRQTKDIETIIQKIYYAKNRHLGTYTPLKNNSELEEINNYIYDLFESNEQLIHSIEHTERRLRDIQLKEIERQFQPHFLFNTMQTIQYLITLSPKLAQTVVQQLSQMLRYSLRTNSHTVELNEELNYIEQYVAIQNIRFDDMIKLHIESSEEARHQTIGKMMLQPLIENAIKHGRDTESLDITIRLTLARQNLHVLVCDNGIGMSSSRLQYVRQSLNNDVFDTKHLGLNHLHNKAMIQYGSHARLHIFSKRNQGTLICYKIPLSRGNVDV.

A run of 2 helical transmembrane segments spans residues 20–40 and 222–242; these read IFPVFLVIIIGLVSFYAIYIW and GITLLIVMAVVLVLLVIFGFI. Residues 297–513 form the Histidine kinase domain; that stretch reads EQLIHSIEHT…LICYKIPLSR (217 aa). The residue at position 325 (histidine 325) is a Phosphohistidine; by autocatalysis.

Post-translationally, autophosphorylated.

It is found in the cell membrane. It carries out the reaction ATP + protein L-histidine = ADP + protein N-phospho-L-histidine.. In terms of biological role, member of the two-component regulatory system HptS/HptR that regulates genes involved in hexose phosphate transport system in response to changes in extracellular phosphate sources. May act as a sensor protein kinase which is autophosphorylated at a histidine residue and transfers its phosphate group to the conserved aspartic acid residue in the regulatory domain of HptS. In turn, HptS antagonizes CcpA-dependent transcription of a subset of CcpA-regulated genes involved in antibiotic susceptibility. The polypeptide is Sensor protein kinase HptS (hptS) (Staphylococcus aureus (strain Mu50 / ATCC 700699)).